The following is a 292-amino-acid chain: MQKYEKLEKIGEGTYGTVFKAKNRETHEIVALKRVRLDDDDEGVPSSALREICLLKELKHKNIVRLHDVLHSDKKLTLVFEFCDQDLKKYFDSCNGDLDPEIVKSFLFQLLKGLGFCHSRNVLHRDLKPQNLLINRNGELKLADFGLARAFGIPVRCYSAEVVTLWYRPPDVLFGAKLYSTSIDMWSAGCIFAELANAGRPLFPGNDVDDQLKRIFRLLGTPTEEQWPAMTKLPDYKPYPMYPATTSLVNVVPKLNATGRDLLQNLLKCNPVQRISAEEALQHPYFSDFCPP.

Residues 4 to 286 (YEKLEKIGEG…AEEALQHPYF (283 aa)) enclose the Protein kinase domain. ATP contacts are provided by residues 10–18 (IGEGTYGTV) and lysine 33. The residue at position 15 (tyrosine 15) is a Phosphotyrosine; by ABL1, EPHA4 and FYN. The residue at position 17 (threonine 17) is a Phosphothreonine. Lysine 56 is modified (N6-acetyllysine). Serine 72 bears the Phosphoserine mark. Aspartate 126 serves as the catalytic Proton acceptor. Position 159 is a phosphoserine (serine 159).

Belongs to the protein kinase superfamily. CMGC Ser/Thr protein kinase family. CDC2/CDKX subfamily. In terms of assembly, heterodimer composed of a catalytic subunit CDK5 and a regulatory subunit CDK5R1 (p25) and macromolecular complex composed of at least CDK5, CDK5R1 (p35) and CDK5RAP1 or CDK5RAP2 or CDK5RAP3. Only the heterodimer shows kinase activity. Under neurotoxic stress and neuronal injury conditions, p35 is cleaved by calpain to generate p25 that hyperactivates CDK5, that becomes functionally disabled and often toxic. Found in a trimolecular complex with CABLES1 and ABL1. Interacts with CABLES1 and CABLES2. Interacts with AATK and GSTP1. Binds to HDAC1 when in complex with p25. Interaction with myristoylation p35 promotes CDK5 association with membranes. Both isoforms 1 and 2 interacts with beta-catenin/CTNNB1. Interacts with delta-catenin/CTNND2 and APEX1. Interacts with P53/TP53 in neurons. Interacts with EPHA4; may mediate the activation of NGEF by EPHA4. Interacts with PTK2/FAK1. The complex p35/CDK5 interacts with CLOCK. In terms of processing, phosphorylation on Tyr-15 by ABL1 and FYN, and on Ser-159 by casein kinase 1 promotes kinase activity. By contrast, phosphorylation at Thr-14 inhibits activity. Post-translationally, phosphorylation at Ser-159 is essential for maximal catalytic activity.

Its subcellular location is the nucleus. It localises to the cytoplasm. It is found in the cell membrane. The protein resides in the perikaryon. The protein localises to the cell projection. Its subcellular location is the lamellipodium. It localises to the growth cone. It is found in the postsynaptic density. The protein resides in the synapse. It carries out the reaction L-seryl-[protein] + ATP = O-phospho-L-seryl-[protein] + ADP + H(+). It catalyses the reaction L-threonyl-[protein] + ATP = O-phospho-L-threonyl-[protein] + ADP + H(+). Its activity is regulated as follows. Inhibited by 2-(1-ethyl-2-hydroxyethylamino)-6-benzylamino-9-isopropylpurine (roscovitine), 1-isopropyl-4-aminobenzyl-6-ether-linked benzimidazoles, resveratrol, AT-7519 and olomoucine. Activated by CDK5R1 (p35) and CDK5R2 (p39) during the development of the nervous system; degradation of CDK5R1 (p35) and CDK5R2 (p39) by proteasome result in down regulation of kinase activity, during this process, CDK5 phosphorylates p35 and induces its ubiquitination and subsequent degradation. Kinase activity is mainly determined by the amount of p35 available and subcellular location; reversible association to plasma membrane inhibits activity. Long-term inactivation as well as CDK5R1 (p25)-mediated hyperactivation of CDK5 triggers cell death. The pro-death activity of hyperactivated CDK5 is suppressed by membrane association of CDK5, via myristoylation of p35. Brain-derived neurotrophic factor, glial-derived neurotrophic factor, nerve growth factor (NGF), retinoic acid, laminin and neuregulin promote activity. Neurotoxicity enhances nuclear activity, thus leading to MEF2 phosphorylation and inhibition prior to apoptosis of cortical neurons. Repression by GSTP1 via p25/p35 translocation prevents neurodegeneration. Functionally, proline-directed serine/threonine-protein kinase essential for neuronal cell cycle arrest and differentiation and may be involved in apoptotic cell death in neuronal diseases by triggering abortive cell cycle re-entry. Interacts with D1 and D3-type G1 cyclins. Phosphorylates SRC, NOS3, VIM/vimentin, p35/CDK5R1, MEF2A, SIPA1L1, SH3GLB1, PXN, PAK1, MCAM/MUC18, SEPT5, SYN1, DNM1, AMPH, SYNJ1, CDK16, RAC1, RHOA, CDC42, TONEBP/NFAT5, MAPT/TAU, MAP1B, histone H1, p53/TP53, HDAC1, APEX1, PTK2/FAK1, huntingtin/HTT, ATM, MAP2, NEFH and NEFM. Regulates several neuronal development and physiological processes including neuronal survival, migration and differentiation, axonal and neurite growth, synaptogenesis, oligodendrocyte differentiation, synaptic plasticity and neurotransmission, by phosphorylating key proteins. Negatively regulates the CACNA1B/CAV2.2 -mediated Ca(2+) release probability at hippocampal neuronal soma and synaptic terminals. Activated by interaction with CDK5R1 (p35) and CDK5R2 (p39), especially in postmitotic neurons, and promotes CDK5R1 (p35) expression in an autostimulation loop. Phosphorylates many downstream substrates such as Rho and Ras family small GTPases (e.g. PAK1, RAC1, RHOA, CDC42) or microtubule-binding proteins (e.g. MAPT/TAU, MAP2, MAP1B), and modulates actin dynamics to regulate neurite growth and/or spine morphogenesis. Also phosphorylates exocytosis associated proteins such as MCAM/MUC18, SEPT5, SYN1, and CDK16/PCTAIRE1 as well as endocytosis associated proteins such as DNM1, AMPH and SYNJ1 at synaptic terminals. In the mature central nervous system (CNS), regulates neurotransmitter movements by phosphorylating substrates associated with neurotransmitter release and synapse plasticity; synaptic vesicle exocytosis, vesicles fusion with the presynaptic membrane, and endocytosis. Promotes cell survival by activating anti-apoptotic proteins BCL2 and STAT3, and negatively regulating of JNK3/MAPK10 activity. Phosphorylation of p53/TP53 in response to genotoxic and oxidative stresses enhances its stabilization by preventing ubiquitin ligase-mediated proteasomal degradation, and induces transactivation of p53/TP53 target genes, thus regulating apoptosis. Phosphorylation of p35/CDK5R1 enhances its stabilization by preventing calpain-mediated proteolysis producing p25/CDK5R1 and avoiding ubiquitin ligase-mediated proteasomal degradation. During aberrant cell-cycle activity and DNA damage, p25/CDK5 activity elicits cell-cycle activity and double-strand DNA breaks that precedes neuronal death by deregulating HDAC1. DNA damage triggered phosphorylation of huntingtin/HTT in nuclei of neurons protects neurons against polyglutamine expansion as well as DNA damage mediated toxicity. Phosphorylation of PXN reduces its interaction with PTK2/FAK1 in matrix-cell focal adhesions (MCFA) during oligodendrocytes (OLs) differentiation. Negative regulator of Wnt/beta-catenin signaling pathway. Activator of the GAIT (IFN-gamma-activated inhibitor of translation) pathway, which suppresses expression of a post-transcriptional regulon of proinflammatory genes in myeloid cells; phosphorylates the linker domain of glutamyl-prolyl tRNA synthetase (EPRS) in a IFN-gamma-dependent manner, the initial event in assembly of the GAIT complex. Phosphorylation of SH3GLB1 is required for autophagy induction in starved neurons. Phosphorylation of TONEBP/NFAT5 in response to osmotic stress mediates its rapid nuclear localization. MEF2 is inactivated by phosphorylation in nucleus in response to neurotoxin, thus leading to neuronal apoptosis. APEX1 AP-endodeoxyribonuclease is repressed by phosphorylation, resulting in accumulation of DNA damage and contributing to neuronal death. NOS3 phosphorylation down regulates NOS3-derived nitrite (NO) levels. SRC phosphorylation mediates its ubiquitin-dependent degradation and thus leads to cytoskeletal reorganization. May regulate endothelial cell migration and angiogenesis via the modulation of lamellipodia formation. Involved in dendritic spine morphogenesis by mediating the EFNA1-EPHA4 signaling. The complex p35/CDK5 participates in the regulation of the circadian clock by modulating the function of CLOCK protein: phosphorylates CLOCK at 'Thr-451' and 'Thr-461' and regulates the transcriptional activity of the CLOCK-BMAL1 heterodimer in association with altered stability and subcellular distribution. This chain is Cyclin-dependent kinase 5, found in Bos taurus (Bovine).